The following is a 456-amino-acid chain: UDP-N-acetylmuramoylalanine--D-glutamate ligase (456 aa).

122 to 128 (GSNGKST) lines the ATP pocket.

It belongs to the MurCDEF family.

It is found in the cytoplasm. The catalysed reaction is UDP-N-acetyl-alpha-D-muramoyl-L-alanine + D-glutamate + ATP = UDP-N-acetyl-alpha-D-muramoyl-L-alanyl-D-glutamate + ADP + phosphate + H(+). It participates in cell wall biogenesis; peptidoglycan biosynthesis. Its function is as follows. Cell wall formation. Catalyzes the addition of glutamate to the nucleotide precursor UDP-N-acetylmuramoyl-L-alanine (UMA). In Saccharophagus degradans (strain 2-40 / ATCC 43961 / DSM 17024), this protein is UDP-N-acetylmuramoylalanine--D-glutamate ligase.